The chain runs to 173 residues: Co-chaperone protein HscB homolog (173 aa).

A J domain is found at 5–77 (CHFALFELQP…PKRARYLLAM (73 aa)).

It belongs to the HscB family. As to quaternary structure, interacts with HscA and stimulates its ATPase activity.

Functionally, co-chaperone involved in the maturation of iron-sulfur cluster-containing proteins. Seems to help targeting proteins to be folded toward HscA. The chain is Co-chaperone protein HscB homolog from Pseudomonas fluorescens (strain SBW25).